The sequence spans 301 residues: NADH-ubiquinone oxidoreductase chain 1 (301 aa).

The next 8 helical transmembrane spans lie at isoleucine 4 to tyrosine 24, leucine 62 to proline 82, isoleucine 96 to alanine 116, leucine 140 to isoleucine 160, tyrosine 165 to alanine 185, leucine 216 to phenylalanine 236, glutamate 247 to isoleucine 267, and leucine 279 to valine 299.

This sequence belongs to the complex I subunit 1 family.

It is found in the mitochondrion inner membrane. It catalyses the reaction a ubiquinone + NADH + 5 H(+)(in) = a ubiquinol + NAD(+) + 4 H(+)(out). Core subunit of the mitochondrial membrane respiratory chain NADH dehydrogenase (Complex I) that is believed to belong to the minimal assembly required for catalysis. Complex I functions in the transfer of electrons from NADH to the respiratory chain. The immediate electron acceptor for the enzyme is believed to be ubiquinone. This is NADH-ubiquinone oxidoreductase chain 1 (MT-ND1) from Nyctalus noctula (Noctule bat).